A 274-amino-acid polypeptide reads, in one-letter code: 5-deoxy-glucuronate isomerase (274 aa).

It belongs to the isomerase IolB family.

The enzyme catalyses 5-deoxy-D-glucuronate = 5-dehydro-2-deoxy-D-gluconate. It participates in polyol metabolism; myo-inositol degradation into acetyl-CoA; acetyl-CoA from myo-inositol: step 4/7. Its function is as follows. Involved in the isomerization of 5-deoxy-glucuronate (5DG) to 5-dehydro-2-deoxy-D-gluconate (DKG or 2-deoxy-5-keto-D-gluconate). In Geobacillus thermodenitrificans (strain NG80-2), this protein is 5-deoxy-glucuronate isomerase.